The primary structure comprises 91 residues: Sec-independent protein translocase protein TatA (91 aa).

A helical membrane pass occupies residues 2–22 (ANLGFPELVLIAVVILVLFGW). The segment covering 43–55 (VSEMKNDGAEAEK) has biased composition (basic and acidic residues). The disordered stretch occupies residues 43–91 (VSEMKNDGAEAEKTSAASTKTDEITSVSSTDTPQPTVTVESKDEKKHPA). Residues 57–81 (SAASTKTDEITSVSSTDTPQPTVTV) show a composition bias toward polar residues. Basic and acidic residues predominate over residues 82-91 (ESKDEKKHPA).

It belongs to the TatA/E family. The Tat system comprises two distinct complexes: a TatABC complex, containing multiple copies of TatA, TatB and TatC subunits, and a separate TatA complex, containing only TatA subunits. Substrates initially bind to the TatABC complex, which probably triggers association of the separate TatA complex to form the active translocon.

Its subcellular location is the cell membrane. Functionally, part of the twin-arginine translocation (Tat) system that transports large folded proteins containing a characteristic twin-arginine motif in their signal peptide across membranes. TatA could form the protein-conducting channel of the Tat system. This Corynebacterium kroppenstedtii (strain DSM 44385 / JCM 11950 / CIP 105744 / CCUG 35717) protein is Sec-independent protein translocase protein TatA.